The following is a 664-amino-acid chain: Macoilin (664 aa).

Helical transmembrane passes span 28 to 48 (TFLY…DFVV), 75 to 95 (AFSV…LLFI), 120 to 140 (VCLP…AIRF), and 154 to 174 (FAAH…KSYV). The segment covering 253–265 (REKGKEKDKDAKK) has biased composition (basic and acidic residues). The interval 253–274 (REKGKEKDKDAKKHNLGINNNN) is disordered. At Ser305 the chain carries Phosphoserine. A compositionally biased stretch (polar residues) spans 320 to 348 (KNYKNASGVVNSSPRSHSATNGSIPSSSS). The segment at 320–375 (KNYKNASGVVNSSPRSHSATNGSIPSSSSKNEKKQKCTSKSPSTHKDLMENCIPNN) is disordered. N-linked (GlcNAc...) asparagine glycosylation is present at Asn324. Position 332 is a phosphoserine (Ser332). Residues Asn340 and Asn452 are each glycosylated (N-linked (GlcNAc...) asparagine). Residues 630 to 664 (TSPLSPVSPHYSSKFVETSPSGLDPNASVYQPLKK) form a disordered region. Residues Ser631 and Ser634 each carry the phosphoserine modification. N-linked (GlcNAc...) asparagine glycosylation is present at Asn655.

The protein belongs to the macoilin family.

The protein resides in the rough endoplasmic reticulum membrane. The protein localises to the nucleus membrane. Plays a role in the regulation of neuronal activity. The sequence is that of Macoilin (MACO1) from Pan troglodytes (Chimpanzee).